The following is a 754-amino-acid chain: 5-methyltetrahydropteroyltriglutamate--homocysteine methyltransferase (754 aa).

Residues Arg-17–Lys-20 and Lys-117 contribute to the 5-methyltetrahydropteroyltri-L-glutamate site. Residues Ile-431–Ser-433 and Glu-484 contribute to the L-homocysteine site. L-methionine contacts are provided by residues Ile-431–Ser-433 and Glu-484. 5-methyltetrahydropteroyltri-L-glutamate contacts are provided by residues Arg-515–Cys-516 and Trp-561. Residue Asp-599 coordinates L-homocysteine. Residue Asp-599 coordinates L-methionine. Glu-605 is a 5-methyltetrahydropteroyltri-L-glutamate binding site. His-641, Cys-643, and Glu-665 together coordinate Zn(2+). Residue His-694 is the Proton donor of the active site. Residue Cys-726 coordinates Zn(2+).

This sequence belongs to the vitamin-B12 independent methionine synthase family. Requires Zn(2+) as cofactor.

The enzyme catalyses 5-methyltetrahydropteroyltri-L-glutamate + L-homocysteine = tetrahydropteroyltri-L-glutamate + L-methionine. Its pathway is amino-acid biosynthesis; L-methionine biosynthesis via de novo pathway; L-methionine from L-homocysteine (MetE route): step 1/1. In terms of biological role, catalyzes the transfer of a methyl group from 5-methyltetrahydrofolate to homocysteine resulting in methionine formation. This chain is 5-methyltetrahydropteroyltriglutamate--homocysteine methyltransferase, found in Salmonella paratyphi B (strain ATCC BAA-1250 / SPB7).